The chain runs to 403 residues: S-adenosylmethionine synthase (403 aa).

His-17 serves as a coordination point for ATP. Asp-19 lines the Mg(2+) pocket. A K(+)-binding site is contributed by Glu-45. Residues Glu-58 and Gln-104 each contribute to the L-methionine site. The flexible loop stretch occupies residues 104–114 (QSSDIAQGVNT). ATP is bound by residues 179 to 181 (DGK), 250 to 251 (KF), Asp-259, 265 to 266 (RK), Ala-282, and Lys-286. Asp-259 lines the L-methionine pocket. Lys-290 contacts L-methionine.

Belongs to the AdoMet synthase family. Homotetramer; dimer of dimers. Mg(2+) is required as a cofactor. The cofactor is K(+).

Its subcellular location is the cytoplasm. The catalysed reaction is L-methionine + ATP + H2O = S-adenosyl-L-methionine + phosphate + diphosphate. The protein operates within amino-acid biosynthesis; S-adenosyl-L-methionine biosynthesis; S-adenosyl-L-methionine from L-methionine: step 1/1. In terms of biological role, catalyzes the formation of S-adenosylmethionine (AdoMet) from methionine and ATP. The overall synthetic reaction is composed of two sequential steps, AdoMet formation and the subsequent tripolyphosphate hydrolysis which occurs prior to release of AdoMet from the enzyme. The sequence is that of S-adenosylmethionine synthase from Mycobacterium leprae (strain Br4923).